The sequence spans 535 residues: Beta-glucosidase 47 (535 aa).

The signal sequence occupies residues 1-38 (MKKSIVYEIMETKSSMYLSQFRLWLCFIITTLVSLSSS). Residue Gln-73 participates in a beta-D-glucoside binding. An N-linked (GlcNAc...) asparagine glycan is attached at Asn-93. Residues His-175 and 220–221 (NE) contribute to the a beta-D-glucoside site. Glu-221 functions as the Proton donor in the catalytic mechanism. Cys-240 and Cys-247 are oxidised to a cystine. Asn-246 carries N-linked (GlcNAc...) asparagine glycosylation. An a beta-D-glucoside-binding site is contributed by Tyr-363. Residues Cys-371 and Cys-376 are joined by a disulfide bond. The N-linked (GlcNAc...) asparagine glycan is linked to Asn-419. Glu-426 is an a beta-D-glucoside binding site. The active-site Nucleophile is the Glu-426. Asn-432 is a glycosylation site (N-linked (GlcNAc...) asparagine). A beta-D-glucoside is bound by residues Trp-470, 477 to 478 (EW), and Phe-486.

Belongs to the glycosyl hydrolase 1 family.

It catalyses the reaction Hydrolysis of terminal, non-reducing beta-D-glucosyl residues with release of beta-D-glucose.. In Arabidopsis thaliana (Mouse-ear cress), this protein is Beta-glucosidase 47.